The primary structure comprises 415 residues: Homoserine O-succinyltransferase (415 aa).

Residues 1–26 show a composition bias toward polar residues; it reads MTSPALTAASVTPSRNTTSPDTTSHR. Positions 1 to 27 are disordered; it reads MTSPALTAASVTPSRNTTSPDTTSHRP. Residues 71-386 form the AB hydrolase-1 domain; it reads NAVLICHALN…HGHDAFLLED (316 aa). Serine 177 (nucleophile) is an active-site residue. Position 247 (arginine 247) interacts with substrate. Active-site residues include aspartate 346 and histidine 379. Aspartate 380 is a binding site for substrate.

This sequence belongs to the AB hydrolase superfamily. MetX family. Homodimer.

The protein resides in the cytoplasm. The enzyme catalyses L-homoserine + succinyl-CoA = O-succinyl-L-homoserine + CoA. Its pathway is amino-acid biosynthesis; L-methionine biosynthesis via de novo pathway; O-succinyl-L-homoserine from L-homoserine: step 1/1. Its function is as follows. Transfers a succinyl group from succinyl-CoA to L-homoserine, forming succinyl-L-homoserine. The polypeptide is Homoserine O-succinyltransferase (Bordetella avium (strain 197N)).